The sequence spans 259 residues: 3-deoxy-manno-octulosonate cytidylyltransferase 1 (259 aa).

It belongs to the KdsB family.

The protein localises to the cytoplasm. It carries out the reaction 3-deoxy-alpha-D-manno-oct-2-ulosonate + CTP = CMP-3-deoxy-beta-D-manno-octulosonate + diphosphate. The protein operates within nucleotide-sugar biosynthesis; CMP-3-deoxy-D-manno-octulosonate biosynthesis; CMP-3-deoxy-D-manno-octulosonate from 3-deoxy-D-manno-octulosonate and CTP: step 1/1. Its pathway is bacterial outer membrane biogenesis; lipopolysaccharide biosynthesis. Its function is as follows. Activates KDO (a required 8-carbon sugar) for incorporation into bacterial lipopolysaccharide in Gram-negative bacteria. The protein is 3-deoxy-manno-octulosonate cytidylyltransferase 1 of Hydrogenovibrio crunogenus (strain DSM 25203 / XCL-2) (Thiomicrospira crunogena).